The sequence spans 279 residues: Phenylalanine 3-hydroxylase (279 aa).

The Fe cation site is built by His-140, His-145, and Glu-186.

It belongs to the biopterin-dependent aromatic amino acid hydroxylase family. Fe(2+) serves as cofactor.

The enzyme catalyses (6R)-L-erythro-5,6,7,8-tetrahydrobiopterin + L-phenylalanine + O2 = 3-hydroxy-L-phenylalanine + (4aS,6R)-4a-hydroxy-L-erythro-5,6,7,8-tetrahydrobiopterin. In vitro, catalyzes the highly regiospecific C-3 hydroxylation of L-phenylalanine (L-Phe) to yield 3-hydroxy-L-phenylalanine (meta-Tyr), an amino acid found in bacterial secondary metabolites such as sanglifehrin A and some pacidamycins. Tetrahydrobiopterin (BH4) seems to be the physiological pterin, however the hydroxylase is also able to use 6-methyltetrahydropterin (6-MePH4). The chain is Phenylalanine 3-hydroxylase from Streptomyces coeruleorubidus.